The following is a 356-amino-acid chain: Fructose-1,6-bisphosphatase class 1 1 (356 aa).

The Mg(2+) site is built by E106, D129, L131, and D132. Residues 132-135 (DGSS), N225, Y258, and K288 contribute to the substrate site. E294 is a Mg(2+) binding site.

Belongs to the FBPase class 1 family. In terms of assembly, homotetramer. Mg(2+) is required as a cofactor.

Its subcellular location is the cytoplasm. The catalysed reaction is beta-D-fructose 1,6-bisphosphate + H2O = beta-D-fructose 6-phosphate + phosphate. It functions in the pathway carbohydrate biosynthesis; gluconeogenesis. This Salinibacter ruber (strain DSM 13855 / M31) protein is Fructose-1,6-bisphosphatase class 1 1.